An 864-amino-acid chain; its full sequence is Leucine--tRNA ligase (864 aa).

The 'HIGH' region signature appears at 42–52 (PYPSGKLHMGH). Residues 624–628 (KMSKS) carry the 'KMSKS' region motif. Residue lysine 627 participates in ATP binding.

Belongs to the class-I aminoacyl-tRNA synthetase family.

Its subcellular location is the cytoplasm. It carries out the reaction tRNA(Leu) + L-leucine + ATP = L-leucyl-tRNA(Leu) + AMP + diphosphate. This is Leucine--tRNA ligase from Burkholderia ambifaria (strain MC40-6).